We begin with the raw amino-acid sequence, 178 residues long: MASSMISSPAVTTVNRAGAGTVAPFTGLKSMAGFPTRKTNNDIASIASNGGRVQCMQVWPTTGKKKFETLSYLPDLDDAQLAKEVEYLLRKGWIPCLEFELEHGFVYRENHRSPGYYDGRYWTMWKLPVFGCTDASQVLKELQEAKTAYPNGFIRIIGFDNVRQVQCISFIAYKPPSF.

The transit peptide at 1 to 54 (MASSMISSPAVTTVNRAGAGTVAPFTGLKSMAGFPTRKTNNDIASIASNGGRVQ) directs the protein to the chloroplast.

This sequence belongs to the RuBisCO small chain family. As to quaternary structure, heterohexadecamer of 8 large and 8 small subunits.

The protein localises to the plastid. It is found in the chloroplast. Functionally, ruBisCO catalyzes two reactions: the carboxylation of D-ribulose 1,5-bisphosphate, the primary event in carbon dioxide fixation, as well as the oxidative fragmentation of the pentose substrate. Both reactions occur simultaneously and in competition at the same active site. Although the small subunit is not catalytic it is essential for maximal activity. This chain is Ribulose bisphosphate carboxylase small subunit, chloroplastic, found in Glycine tomentella (Woolly glycine).